Consider the following 330-residue polypeptide: Protein ANTHESIS POMOTING FACTOR 1 (330 aa).

WD repeat units follow at residues 22-61, 112-151, 153-191, 198-237, 242-281, and 284-323; these read DFGG…QLKI, GHKD…CQGI, HLRG…KGPF, GDTA…KKCG, PSQG…EVAR, and NNIG…APAD.

This sequence belongs to the WD repeat SWD2 family. As to expression, expressed in the shoot apical meristem (SAM), embryos, seedlings, cotyledons, leaves primordia, young leaves and roots.

It is found in the nucleus. In terms of biological role, component of a chromatin regulatory complex involved in regulating chromatin structure in the nucleus. Promotes flowering under long days (LD) via the regulation of bolting. This Arabidopsis thaliana (Mouse-ear cress) protein is Protein ANTHESIS POMOTING FACTOR 1.